We begin with the raw amino-acid sequence, 508 residues long: ATP synthase subunit alpha, chloroplastic (508 aa).

Position 172-179 (172-179) interacts with ATP; it reads GDRQTGKT.

This sequence belongs to the ATPase alpha/beta chains family. As to quaternary structure, F-type ATPases have 2 components, CF(1) - the catalytic core - and CF(0) - the membrane proton channel. CF(1) has five subunits: alpha(3), beta(3), gamma(1), delta(1), epsilon(1). CF(0) has four main subunits: a, b, b' and c.

It localises to the plastid. The protein localises to the chloroplast thylakoid membrane. The enzyme catalyses ATP + H2O + 4 H(+)(in) = ADP + phosphate + 5 H(+)(out). Its function is as follows. Produces ATP from ADP in the presence of a proton gradient across the membrane. The alpha chain is a regulatory subunit. The polypeptide is ATP synthase subunit alpha, chloroplastic (Psilotum nudum (Whisk fern)).